The primary structure comprises 161 residues: Large ribosomal subunit protein bL9 (161 aa).

Belongs to the bacterial ribosomal protein bL9 family.

In terms of biological role, binds to the 23S rRNA. This is Large ribosomal subunit protein bL9 from Blochmanniella floridana.